The sequence spans 242 residues: Pyridoxine 5'-phosphate synthase (242 aa).

Asparagine 7 is a binding site for 3-amino-2-oxopropyl phosphate. 1-deoxy-D-xylulose 5-phosphate is bound at residue 9–10 (DH). Position 18 (arginine 18) interacts with 3-amino-2-oxopropyl phosphate. The active-site Proton acceptor is histidine 44. 1-deoxy-D-xylulose 5-phosphate-binding residues include arginine 46 and histidine 51. Glutamate 71 (proton acceptor) is an active-site residue. Residue threonine 101 coordinates 1-deoxy-D-xylulose 5-phosphate. The Proton donor role is filled by histidine 192. Residues glycine 193 and 214–215 (GH) contribute to the 3-amino-2-oxopropyl phosphate site.

It belongs to the PNP synthase family. Homooctamer; tetramer of dimers.

It localises to the cytoplasm. It catalyses the reaction 3-amino-2-oxopropyl phosphate + 1-deoxy-D-xylulose 5-phosphate = pyridoxine 5'-phosphate + phosphate + 2 H2O + H(+). The protein operates within cofactor biosynthesis; pyridoxine 5'-phosphate biosynthesis; pyridoxine 5'-phosphate from D-erythrose 4-phosphate: step 5/5. Functionally, catalyzes the complicated ring closure reaction between the two acyclic compounds 1-deoxy-D-xylulose-5-phosphate (DXP) and 3-amino-2-oxopropyl phosphate (1-amino-acetone-3-phosphate or AAP) to form pyridoxine 5'-phosphate (PNP) and inorganic phosphate. In Synechocystis sp. (strain ATCC 27184 / PCC 6803 / Kazusa), this protein is Pyridoxine 5'-phosphate synthase.